We begin with the raw amino-acid sequence, 131 residues long: Hypocretin neuropeptide precursor (131 aa).

Position 34 is a pyrrolidone carboxylic acid (Q34). Cystine bridges form between C39–C45 and C40–C47. At L66 the chain carries Leucine amide. The interval 104 to 131 is disordered; that stretch reads EPALRPCSGRRCPSEAASSVAPGGRSGV.

Belongs to the orexin family.

The protein resides in the rough endoplasmic reticulum. Its subcellular location is the cytoplasmic vesicle. It localises to the synapse. Its function is as follows. Neuropeptides that play a significant role in the regulation of food intake and sleep-wakefulness, possibly by coordinating the complex behavioral and physiologic responses of these complementary homeostatic functions. A broader role in the homeostatic regulation of energy metabolism, autonomic function, hormonal balance and the regulation of body fluids, is also suggested. In terms of biological role, binds to orexin receptors HCRTR1/OX1R and HCRTR2/OX2R with a high affinity. Stimulates food intake. Modulates pituitary luteinizing hormone secretion in an ovarian steroid-dependent manner. Functionally, binds to orexin receptor HCRTR2/OX2R only. Stimulates food intake. Modulates pituitary luteinizing hormone secretion in an ovarian steroid-dependent manner. The chain is Hypocretin neuropeptide precursor (HCRT) from Bos taurus (Bovine).